A 385-amino-acid polypeptide reads, in one-letter code: MMLRSQAKNVDLTSQADSRHQQKRKQAEQLDALKNPSEPAAKKQHSKGLTELRAHISGFKIDSAKRDPLGKSRTSRRDVENLPPQKSRYVDPCPHYDYDLEEAGNPDSISDYAQGIFDYYRHREVHFRVRKYLHKHPEVDVKTRAILIDWMVEIQETFELNHETLYNAVKLTDMYLCKTKNVDKNTIQKLACVAIFIAAKYDERSPPLVDDLIYLSGDRFSRDELLAMERELFATVGYDLGSPLSYRYLRRFGRVCRVDMKTLTMGRFILETSLMVYEYAMVSQSRLAAAAFVLAMRMLDKNNEYEWNPVLEKYSGFTGEEVMPLVEHMNHILHFSKDKWAQLTSVRQKYSHEVFFHVASIPMLPDTLKVVDSHTYAPVPMLSYP.

The segment covering 1 to 16 (MMLRSQAKNVDLTSQA) has biased composition (polar residues). Disordered regions lie at residues 1–48 (MMLR…HSKG) and 63–88 (SAKR…QKSR). Composition is skewed to basic and acidic residues over residues 17-28 (DSRHQQKRKQAE) and 63-80 (SAKR…RDVE).

It belongs to the cyclin family. Cyclin AB subfamily.

Its subcellular location is the nucleus. Its function is as follows. Could be involved at the G2/M (mitosis) transition. Interacts with the CDK1 and CDK2 protein kinases. G2/M cyclins accumulate steadily during G2 and are abruptly destroyed at mitosis. Plays a role during oocyte meiosis II. This chain is G2/mitotic-specific cyclin-B3 (cyb-3), found in Caenorhabditis elegans.